The primary structure comprises 122 residues: Large ribosomal subunit protein uL14 (122 aa).

The protein belongs to the universal ribosomal protein uL14 family. In terms of assembly, part of the 50S ribosomal subunit. Forms a cluster with proteins L3 and L19. In the 70S ribosome, L14 and L19 interact and together make contacts with the 16S rRNA in bridges B5 and B8.

In terms of biological role, binds to 23S rRNA. Forms part of two intersubunit bridges in the 70S ribosome. This Acidothermus cellulolyticus (strain ATCC 43068 / DSM 8971 / 11B) protein is Large ribosomal subunit protein uL14.